Reading from the N-terminus, the 219-residue chain is Large ribosomal subunit protein uL3 (219 aa).

It belongs to the universal ribosomal protein uL3 family. Part of the 50S ribosomal subunit. Forms a cluster with proteins L14 and L19.

One of the primary rRNA binding proteins, it binds directly near the 3'-end of the 23S rRNA, where it nucleates assembly of the 50S subunit. The protein is Large ribosomal subunit protein uL3 of Corynebacterium kroppenstedtii (strain DSM 44385 / JCM 11950 / CIP 105744 / CCUG 35717).